The primary structure comprises 133 residues: Snaclec echicetin subunit alpha (133 aa).

Intrachain disulfides connect Cys4/Cys15, Cys31/Cys127, and Cys102/Cys119. Residues 11–128 form the C-type lectin domain; sequence YEGHCYQLFR…CEFKFPFVCK (118 aa).

The protein belongs to the snaclec family. As to quaternary structure, heterodimer of subunits alpha and beta; disulfide-linked. Forms an active complex with the pentameric immunoglobuline Mkappa (IgMkappa). In terms of tissue distribution, expressed by the venom gland.

The protein resides in the secreted. Functionally, echicetin itself inhibits aggregation of washed platelets induced by vWF, thrombin or alboaggregin-A. However, when complexed with the pentameric plasma immunoglobulin Mkappa (IgMkappa), echicetin binds specifically to GPIb and activates platelets. This is caused by P-selectin expression and activation of alpha-IIb/beta-3 as well as tyrosine phosphorylation of several signal transduction molecules, including p53/56(LYN), p64, p72(SYK), p70 to p90, and p120. In vivo, it induces thrombocytopenia when injected into mice, probably accounting of activation of platelets rather than inhibition. This Echis carinatus sochureki (Saw-scaled viper) protein is Snaclec echicetin subunit alpha.